The chain runs to 373 residues: S-adenosylmethionine:tRNA ribosyltransferase-isomerase (373 aa).

The protein belongs to the QueA family. Monomer.

Its subcellular location is the cytoplasm. The enzyme catalyses 7-aminomethyl-7-carbaguanosine(34) in tRNA + S-adenosyl-L-methionine = epoxyqueuosine(34) in tRNA + adenine + L-methionine + 2 H(+). It participates in tRNA modification; tRNA-queuosine biosynthesis. Its function is as follows. Transfers and isomerizes the ribose moiety from AdoMet to the 7-aminomethyl group of 7-deazaguanine (preQ1-tRNA) to give epoxyqueuosine (oQ-tRNA). The protein is S-adenosylmethionine:tRNA ribosyltransferase-isomerase of Prochlorococcus marinus (strain MIT 9515).